A 412-amino-acid chain; its full sequence is Thyroxine-binding globulin (412 aa).

The first 16 residues, 1 to 16, serve as a signal peptide directing secretion; the sequence is MPLFLYMVLLVLGIHC. N-linked (GlcNAc...) asparagine glycosylation is found at N20, N35, N98, N164, and N252. N292 and K395 together coordinate thyroxine.

The protein belongs to the serpin family. Expressed by the liver and secreted in plasma.

The protein localises to the secreted. In terms of biological role, major thyroid hormone transport protein in serum. This chain is Thyroxine-binding globulin (SERPINA7), found in Sus scrofa (Pig).